The following is a 235-amino-acid chain: Triosephosphate isomerase (235 aa).

7-9 (NFK) provides a ligand contact to substrate. The active-site Electrophile is the H92. The active-site Proton acceptor is E161. Residues G167 and S197 each contribute to the substrate site.

The protein belongs to the triosephosphate isomerase family. Homodimer.

Its subcellular location is the cytoplasm. It carries out the reaction D-glyceraldehyde 3-phosphate = dihydroxyacetone phosphate. It participates in carbohydrate biosynthesis; gluconeogenesis. Its pathway is carbohydrate degradation; glycolysis; D-glyceraldehyde 3-phosphate from glycerone phosphate: step 1/1. In terms of biological role, involved in the gluconeogenesis. Catalyzes stereospecifically the conversion of dihydroxyacetone phosphate (DHAP) to D-glyceraldehyde-3-phosphate (G3P). In Helicobacter hepaticus (strain ATCC 51449 / 3B1), this protein is Triosephosphate isomerase.